Reading from the N-terminus, the 549-residue chain is MKRVLTALAAALPFAAHAADAISGAVERQPTNWQAIIMFLIFVVFTLGITYWASKRVRSRSDYYTAGGNITGFQNGLAIAGDYMSAASFLGISALVFTSGYDGLIYSLGFLVGWPIILFLIAERLRNLGRYTFADVASYRLKQGPIRILSACGSLVVVALYLIAQMVGAGKLIELLFGLNYHIAVVLVGVLMMMYVLFGGMLATTWVQIIKAVLLLFGASFMAFMVMKHVGFSFNNLFTEAMAVHPKGTAIMSPGGLVQDPISALSLGLGLIFGTAGLPHILMRFFTVSDAREARKSVFYATGFMGYFYILTFIIGFGAIMLVGANPAYKDAAGALIGGNNMAAVHLANAVGGNLFLGFISAVAFATILAVVAGLTLAGASAVSHDLYANVFRKGATEREELKVSKITVLVLDVIAIILGVLFENQNIAFMVGLAFAIAASCNFPIILLSMYWSKLTTRGAMLGGWLGLLTAVVLMILGPTIWVQILGHEKAIFPYEYPALFSISVAFLGIWFFSATDNSAEGNREREQFRAQFIRSQTGFGVQQGRAH.

Over 1–32 (MKRVLTALAAALPFAAHAADAISGAVERQPTN) the chain is Periplasmic. The helical transmembrane segment at 33-55 (WQAIIMFLIFVVFTLGITYWASK) threads the bilayer. At 56–75 (RVRSRSDYYTAGGNITGFQN) the chain is on the cytoplasmic side. The helical transmembrane segment at 76-98 (GLAIAGDYMSAASFLGISALVFT) threads the bilayer. At 99–102 (SGYD) the chain is on the periplasmic side. Residues 103-125 (GLIYSLGFLVGWPIILFLIAERL) traverse the membrane as a helical segment. The Cytoplasmic segment spans residues 126 to 145 (RNLGRYTFADVASYRLKQGP). A helical transmembrane segment spans residues 146 to 168 (IRILSACGSLVVVALYLIAQMVG). Topologically, residues 169–182 (AGKLIELLFGLNYH) are periplasmic. Residues 183–205 (IAVVLVGVLMMMYVLFGGMLATT) form a helical membrane-spanning segment. Residues 206–211 (WVQIIK) are Cytoplasmic-facing. A helical transmembrane segment spans residues 212–234 (AVLLLFGASFMAFMVMKHVGFSF). Residues 235–260 (NNLFTEAMAVHPKGTAIMSPGGLVQD) lie on the Periplasmic side of the membrane. A helical membrane pass occupies residues 261–283 (PISALSLGLGLIFGTAGLPHILM). The Cytoplasmic portion of the chain corresponds to 284–302 (RFFTVSDAREARKSVFYAT). A helical membrane pass occupies residues 303 to 325 (GFMGYFYILTFIIGFGAIMLVGA). Topologically, residues 326–361 (NPAYKDAAGALIGGNNMAAVHLANAVGGNLFLGFIS) are periplasmic. The chain crosses the membrane as a helical span at residues 362 to 384 (AVAFATILAVVAGLTLAGASAVS). Residues 385 to 403 (HDLYANVFRKGATEREELK) lie on the Cytoplasmic side of the membrane. Residues 404 to 423 (VSKITVLVLDVIAIILGVLF) traverse the membrane as a helical segment. The Periplasmic segment spans residues 424 to 427 (ENQN). A helical membrane pass occupies residues 428–450 (IAFMVGLAFAIAASCNFPIILLS). Residues 451–461 (MYWSKLTTRGA) are Cytoplasmic-facing. A helical transmembrane segment spans residues 462-484 (MLGGWLGLLTAVVLMILGPTIWV). The Periplasmic portion of the chain corresponds to 485-493 (QILGHEKAI). The chain crosses the membrane as a helical span at residues 494–516 (FPYEYPALFSISVAFLGIWFFSA). The Cytoplasmic portion of the chain corresponds to 517–549 (TDNSAEGNREREQFRAQFIRSQTGFGVQQGRAH).

Belongs to the sodium:solute symporter (SSF) (TC 2.A.21) family.

Its subcellular location is the cell inner membrane. Transports acetate. In Salmonella typhi, this protein is Cation/acetate symporter ActP (actP).